We begin with the raw amino-acid sequence, 434 residues long: Glutamyl-tRNA reductase (434 aa).

Residues 57-60 (TCNR), serine 116, 121-123 (ETQ), and glutamine 127 contribute to the substrate site. Cysteine 58 acts as the Nucleophile in catalysis. 196–201 (GAGEMI) provides a ligand contact to NADP(+).

This sequence belongs to the glutamyl-tRNA reductase family. In terms of assembly, homodimer.

It carries out the reaction (S)-4-amino-5-oxopentanoate + tRNA(Glu) + NADP(+) = L-glutamyl-tRNA(Glu) + NADPH + H(+). The protein operates within porphyrin-containing compound metabolism; protoporphyrin-IX biosynthesis; 5-aminolevulinate from L-glutamyl-tRNA(Glu): step 1/2. Functionally, catalyzes the NADPH-dependent reduction of glutamyl-tRNA(Glu) to glutamate 1-semialdehyde (GSA). The chain is Glutamyl-tRNA reductase from Burkholderia pseudomallei (strain 1106a).